We begin with the raw amino-acid sequence, 474 residues long: tRNA-2-methylthio-N(6)-dimethylallyladenosine synthase (474 aa).

The MTTase N-terminal domain maps to 3 to 120 (QKLHIKTWGC…LPEMINQIRG (118 aa)). [4Fe-4S] cluster contacts are provided by C12, C49, C83, C157, C161, and C164. The region spanning 143-375 (KAEGPTAFVS…QQRINNQAAK (233 aa)) is the Radical SAM core domain. Residues 378-441 (RAMLGTEQRV…TNSLRGDVIR (64 aa)) form the TRAM domain.

Belongs to the methylthiotransferase family. MiaB subfamily. As to quaternary structure, monomer. Requires [4Fe-4S] cluster as cofactor.

It is found in the cytoplasm. It catalyses the reaction N(6)-dimethylallyladenosine(37) in tRNA + (sulfur carrier)-SH + AH2 + 2 S-adenosyl-L-methionine = 2-methylsulfanyl-N(6)-dimethylallyladenosine(37) in tRNA + (sulfur carrier)-H + 5'-deoxyadenosine + L-methionine + A + S-adenosyl-L-homocysteine + 2 H(+). Functionally, catalyzes the methylthiolation of N6-(dimethylallyl)adenosine (i(6)A), leading to the formation of 2-methylthio-N6-(dimethylallyl)adenosine (ms(2)i(6)A) at position 37 in tRNAs that read codons beginning with uridine. This is tRNA-2-methylthio-N(6)-dimethylallyladenosine synthase from Actinobacillus succinogenes (strain ATCC 55618 / DSM 22257 / CCUG 43843 / 130Z).